The chain runs to 245 residues: Putative insertion sequence ATP-binding protein y4pL (245 aa).

An ATP-binding site is contributed by 106–113 (GPSGVGKS).

This sequence belongs to the IS21/IS1162 putative ATP-binding protein family.

The protein is Putative insertion sequence ATP-binding protein y4pL of Sinorhizobium fredii (strain NBRC 101917 / NGR234).